The chain runs to 277 residues: Sulfur carrier protein FdhD (277 aa).

The active-site Cysteine persulfide intermediate is Cys121. 260–265 (FCKPGR) serves as a coordination point for Mo-bis(molybdopterin guanine dinucleotide).

It belongs to the FdhD family.

It localises to the cytoplasm. Functionally, required for formate dehydrogenase (FDH) activity. Acts as a sulfur carrier protein that transfers sulfur from IscS to the molybdenum cofactor prior to its insertion into FDH. The sequence is that of Sulfur carrier protein FdhD from Escherichia coli O8 (strain IAI1).